Here is a 461-residue protein sequence, read N- to C-terminus: Armadillo repeat-containing X-linked protein 1 (461 aa).

At 1–6 (MGRTRE) the chain is on the mitochondrial intermembrane side. 2 mitochondrion outer membrane (MOM)-targeting sequence regions span residues 1 to 6 (MGRTRE) and 26 to 36 (RLTWGKDENEK). Residues 7 to 29 (AGCVAAGMVIGAGACYCVYRLTW) traverse the membrane as a helical; Signal-anchor segment. Over 30-461 (GKDENEKLWD…VKVLKVLTKL (432 aa)) the chain is Cytoplasmic. Disordered regions lie at residues 34-110 (NEKL…HSEG) and 148-192 (SSLP…PATA). Residues 38–51 (WDDEDEEEEEEEES) show a composition bias toward acidic residues. The segment covering 96-110 (PDVKKEVYPESHSEG) has biased composition (basic and acidic residues). Residues 167-185 (SRARNRTSGKVKRKNRSKS) are compositionally biased toward basic residues. 4 ARM repeats span residues 203–243 (PYKI…NNAA), 245–284 (SFNQNAIRELGGVPIIAKLIKTRDPIIREKTYNALNNLSV), 366–406 (PAMT…NIND), and 423–461 (SSLFFLFKESGVCVKKIKALASHKDLVVKVKVLKVLTKL).

It belongs to the eutherian X-chromosome-specific Armcx family. In terms of assembly, interacts with MIRO1.

Its subcellular location is the mitochondrion. The protein localises to the mitochondrion outer membrane. In terms of biological role, regulates mitochondrial transport during axon regeneration. Increases the proportion of motile mitochondria by recruiting stationary mitochondria into the motile pool. Enhances mitochondria movement and neurite growth in both adult axons and embryonic neurons. Promotes neuronal survival and axon regeneration after nerve injury. May link mitochondria to the Trak1-kinesin motor complex via its interaction with MIRO1. The sequence is that of Armadillo repeat-containing X-linked protein 1 (Armcx1) from Rattus norvegicus (Rat).